Consider the following 133-residue polypeptide: Triatox (133 aa).

Residues 1–22 (MTTLRVLLAVCCAAYCILAEDV) form the signal peptide. Residues 23–125 (TVPANGELKL…RAMCTVYSAE (103 aa)) enclose the CUB domain. Cysteine 70 and cysteine 86 are joined by a disulfide.

Belongs to the venom CUB family. Expressed by the venom gland.

It localises to the secreted. Functionally, may function as an antimicrobial peptide and may be related to the innate defense of the insect in the salivary glands. The chain is Triatox from Triatoma infestans (Assassin bug).